The chain runs to 37 residues: Ice-structuring protein 3 (37 aa).

This sequence belongs to the type-I AFP family.

In terms of biological role, contributes to protect fish blood from freezing at subzero sea water temperatures. Lowers the blood freezing point. Binds to nascent ice crystals and prevents further growth. This chain is Ice-structuring protein 3, found in Pseudopleuronectes americanus (Winter flounder).